Reading from the N-terminus, the 683-residue chain is Phenoloxidase 3 (683 aa).

A propeptide spanning residues 1 to 48 is cleaved from the precursor; it reads MADKKNLLLLFDHPTEPVFMDKGGNGTVFDVPASYVTDRYNKMCKKVQ. N-linked (GlcNAc...) asparagine glycosylation occurs at N25. Cu cation contacts are provided by H209, H213, and H239. Residue E351 is the Proton acceptor of the active site. An N-linked (GlcNAc...) asparagine glycan is attached at N358. Cu cation-binding residues include H366, H370, and H406. N-linked (GlcNAc...) asparagine glycosylation is found at N492 and N514. Disulfide bonds link C574–C617 and C576–C624.

This sequence belongs to the tyrosinase family. Cu(2+) serves as cofactor. In terms of processing, upon activation, a trypsin type protease cleaves prophenol oxidase to yield the active enzyme.

The protein localises to the secreted. The enzyme catalyses 2 L-dopa + O2 = 2 L-dopaquinone + 2 H2O. It catalyses the reaction L-tyrosine + O2 = L-dopaquinone + H2O. Functionally, this is a copper-containing oxidase that functions in the formation of pigments such as melanins and other polyphenolic compounds. Catalyzes the rate-limiting conversions of tyrosine to DOPA, DOPA to DOPA-quinone and possibly 5,6 dihydroxyindole to indole-5'6 quinone. The polypeptide is Phenoloxidase 3 (PPO3) (Drosophila erecta (Fruit fly)).